Here is an 89-residue protein sequence, read N- to C-terminus: Elongation factor 1-beta (89 aa).

The protein belongs to the EF-1-beta/EF-1-delta family.

In terms of biological role, promotes the exchange of GDP for GTP in EF-1-alpha/GDP, thus allowing the regeneration of EF-1-alpha/GTP that could then be used to form the ternary complex EF-1-alpha/GTP/AAtRNA. The protein is Elongation factor 1-beta (ef1b) of Methanocaldococcus jannaschii (strain ATCC 43067 / DSM 2661 / JAL-1 / JCM 10045 / NBRC 100440) (Methanococcus jannaschii).